We begin with the raw amino-acid sequence, 176 residues long: Translation initiation factor IF-3 (176 aa).

The protein belongs to the IF-3 family. As to quaternary structure, monomer.

The protein localises to the cytoplasm. In terms of biological role, IF-3 binds to the 30S ribosomal subunit and shifts the equilibrium between 70S ribosomes and their 50S and 30S subunits in favor of the free subunits, thus enhancing the availability of 30S subunits on which protein synthesis initiation begins. The sequence is that of Translation initiation factor IF-3 from Streptococcus thermophilus (strain ATCC BAA-491 / LMD-9).